Reading from the N-terminus, the 896-residue chain is Cytokine receptor common subunit beta (896 aa).

An N-terminal signal peptide occupies residues Met-1–Gly-22. Residues His-23–Trp-441 are Extracellular-facing. A disulfide bond links Cys-39 and Cys-49. N-linked (GlcNAc...) asparagine glycosylation is present at Asn-62. Cystine bridges form between Cys-77-Cys-99 and Cys-88-Cys-94. Residues Pro-136–Gly-243 form the Fibronectin type-III 1 domain. Asn-141 carries N-linked (GlcNAc...) asparagine glycosylation. The segment covering Ser-220–Ser-233 has biased composition (low complexity). The tract at residues Ser-220–Gly-243 is disordered. Intrachain disulfides connect Cys-253-Cys-263 and Cys-292-Cys-310. The 97-residue stretch at Gln-343–Thr-439 folds into the Fibronectin type-III 2 domain. An N-linked (GlcNAc...) asparagine glycan is attached at Asn-350. A WSXWS motif motif is present at residues Trp-428 to Ser-432. The chain crosses the membrane as a helical span at residues Val-442–Leu-463. The Cytoplasmic segment spans residues Arg-464–Cys-896. The Box 1 motif signature appears at Trp-477 to Ser-485. 2 disordered regions span residues Glu-543–Leu-620 and Cys-658–Leu-725. Composition is skewed to polar residues over residues Pro-555 to Asn-571 and Cys-658 to Pro-668. Positions Pro-716–Leu-725 are enriched in low complexity. Phosphoserine occurs at positions 752 and 754. Tyr-765 is subject to Phosphotyrosine. The tract at residues Ser-771–Glu-810 is disordered.

This sequence belongs to the type I cytokine receptor family. Type 4 subfamily. Heterodimer of an alpha and a beta subunit. The beta subunit is common to the IL3, IL5 and GM-CSF receptors. The signaling GM-CSF receptor complex is a dodecamer of two head-to-head hexamers of two alpha, two beta, and two ligand subunits. Interacts with TMEM102; this interaction occurs preferentially in the absence of CSF2. Interacts with FCER1G; this interaction is direct. Interacts with LYN. Post-translationally, may be phosphorylated by LYN.

The protein resides in the membrane. High affinity receptor for interleukin-3, interleukin-5 and granulocyte-macrophage colony-stimulating factor. The protein is Cytokine receptor common subunit beta (Csf2rb) of Mus musculus (Mouse).